Here is a 381-residue protein sequence, read N- to C-terminus: Putative F-box protein At3g17500 (381 aa).

In terms of domain architecture, F-box spans 1–45; the sequence is MMSNLPLDLVEEILSRVPATSLKRLRSTCKSWNNCYKDQRFTEKH.

This is Putative F-box protein At3g17500 from Arabidopsis thaliana (Mouse-ear cress).